The sequence spans 94 residues: Cell division topological specificity factor (94 aa).

The protein belongs to the MinE family.

Prevents the cell division inhibition by proteins MinC and MinD at internal division sites while permitting inhibition at polar sites. This ensures cell division at the proper site by restricting the formation of a division septum at the midpoint of the long axis of the cell. The chain is Cell division topological specificity factor from Beijerinckia indica subsp. indica (strain ATCC 9039 / DSM 1715 / NCIMB 8712).